The following is a 360-amino-acid chain: Photosystem II protein D1 1 (360 aa).

The next 3 membrane-spanning stretches (helical) occupy residues 29 to 46, 118 to 133, and 142 to 156; these read YVGW…SATI, HFLI…EWEL, and WICI…AAAA. His-118 contacts chlorophyll a. A pheophytin a-binding site is contributed by Tyr-126. Residues Asp-170 and Glu-189 each coordinate [CaMn4O5] cluster. Residues 197–218 traverse the membrane as a helical segment; the sequence is FHMLGVAGVFGGSLFSAMHGSL. His-198 contributes to the chlorophyll a binding site. A quinone-binding positions include His-215 and 264 to 265; that span reads SF. Fe cation is bound at residue His-215. His-272 serves as a coordination point for Fe cation. A helical membrane pass occupies residues 274 to 288; sequence FLAAWPVIGIWFTAL. 4 residues coordinate [CaMn4O5] cluster: His-332, Glu-333, Asp-342, and Ala-344. The propeptide occupies 345-360; sequence GTESAPVAVGNADLNG.

The protein belongs to the reaction center PufL/M/PsbA/D family. As to quaternary structure, PSII is composed of 1 copy each of membrane proteins PsbA, PsbB, PsbC, PsbD, PsbE, PsbF, PsbH, PsbI, PsbJ, PsbK, PsbL, PsbM, PsbT, PsbX, Psb30/Ycf12, peripheral proteins PsbO, CyanoQ (PsbQ), PsbU, PsbV and a large number of cofactors. It forms dimeric complexes. The cofactor is The D1/D2 heterodimer binds P680, chlorophylls that are the primary electron donor of PSII, and subsequent electron acceptors. It shares a non-heme iron and each subunit binds pheophytin, quinone, additional chlorophylls, carotenoids and lipids. D1 provides most of the ligands for the Mn4-Ca-O5 cluster of the oxygen-evolving complex (OEC). There is also a Cl(-1) ion associated with D1 and D2, which is required for oxygen evolution. The PSII complex binds additional chlorophylls, carotenoids and specific lipids.. Post-translationally, tyr-161 forms a radical intermediate that is referred to as redox-active TyrZ, YZ or Y-Z. C-terminally processed by CtpA; processing is essential to allow assembly of the oxygen-evolving complex and thus photosynthetic growth.

The protein resides in the cell inner membrane. It catalyses the reaction 2 a plastoquinone + 4 hnu + 2 H2O = 2 a plastoquinol + O2. In terms of biological role, photosystem II (PSII) is a light-driven water:plastoquinone oxidoreductase that uses light energy to abstract electrons from H(2)O, generating O(2) and a proton gradient subsequently used for ATP formation. It consists of a core antenna complex that captures photons, and an electron transfer chain that converts photonic excitation into a charge separation. The D1/D2 (PsbA/PsbD) reaction center heterodimer binds P680, the primary electron donor of PSII as well as several subsequent electron acceptors. The chain is Photosystem II protein D1 1 from Gloeobacter violaceus (strain ATCC 29082 / PCC 7421).